Consider the following 333-residue polypeptide: Auxiliary capsid protein (333 aa).

An FD region spans residues 75–237 (HKLVRYSVTL…ATVVTPTKTV (163 aa)).

In terms of assembly, interacts (via FD region) with the major capsid protein.

The protein localises to the virion. Auxiliary capsid protein that forms an outer layer on the major capsid protein protrusions. The protein is Auxiliary capsid protein of Bacteroides phage crAss001 (Bacteroides phage PhiCrAss001).